A 902-amino-acid chain; its full sequence is MRIICRQIVLLFSGFWGLAMGAFPSSVQIGGLFIRNTDQEYTAFRLAIFLHNTSPNASEAPFNLVPHVDNIETANSFAVTNAFCSQYSRGVFAIFGLYDKRSVHTLTSFCSALHISLITPSFPTEGESQFVLQLRPSLRGALLSLLDHYEWNCFVFLYDTDRGYSILQAIMEKAGQNGWHVSAICVENFNDVSYRQLLEELDRRQEKKFVIDCEIERLQNILEQIVSVGKHVKGYHYIIANLGFKDISLERFIHGGANVTGFQLVDFNTPMVTKLMDRWKKLDQREYPGSETPPKYTSALTYDGVLVMAETFRSLRRQKIDISRRGNAGDCLANPAAPWGQGIDMERTLKQVRIQGLTGNVQFDHYGRRVNYTMDVFELKSTGPRKVGYWNDMDKLVLIQDAPTLGNDTAAIENRTVVVTTIMESPYVMYKKNHEMFEGNDKYEGYCVDLASEIAKHIGIKYKIAIVPDGKYGARDADTKIWNGMVGELVYGKAEIAIAPLTITLVREEVIDFSKPFMSLGISIMIKKPQKSKPGVFSFLDPLAYEIWMCIVFAYIGVSVVLFLVSRFSPYEWHTEEPEDGKEGPSDQPPNEFGIFNSLWFSLGAFMQQGCDISPRSLSGRIVGGVWWFFTLIIISSYTANLAAFLTVERMVSPIESAEDLAKQTEIAYGTLDSGSTKEFFRRSKIAVYEKMWTYMRSAEPSVFTRTTAEGVARVRKSKGKFAFLLESTMNEYIEQRKPCDTMKVGGNLDSKGYGVATPKGSSLRTPVNLAVLKLSEAGVLDKLKNKWWYDKGECGPKDSGSKDKTSALSLSNVAGVFYILVGGLGLAMLVALIEFCYKSRAEAKRMKLTFSEAIRNKARLSITGSVGENGRVLTPDCPKAVHTGTAIRQSSGLAVIASDLP.

Residues 1–20 form the signal peptide; it reads MRIICRQIVLLFSGFWGLAM. The Extracellular portion of the chain corresponds to 22–544; the sequence is AFPSSVQIGG…GVFSFLDPLA (523 aa). Asn-52, Asn-56, Asn-258, Asn-371, Asn-407, and Asn-414 each carry an N-linked (GlcNAc...) asparagine glycan. A disulfide bond links Cys-84 and Cys-331. L-glutamate contacts are provided by Pro-500, Thr-502, and Arg-507. Residues 545 to 565 traverse the membrane as a helical segment; the sequence is YEIWMCIVFAYIGVSVVLFLV. The Cytoplasmic segment spans residues 566–592; sequence SRFSPYEWHTEEPEDGKEGPSDQPPNE. An intramembrane region (helical; Pore-forming) is located at residues 593–608; sequence FGIFNSLWFSLGAFMQ. An intramembrane segment occupies 609–611; it reads QGC. Residue Cys-611 is the site of S-palmitoyl cysteine attachment. The Cytoplasmic portion of the chain corresponds to 612-617; that stretch reads DISPRS. A helical membrane pass occupies residues 618-638; sequence LSGRIVGGVWWFFTLIIISSY. The Extracellular segment spans residues 639–813; that stretch reads TANLAAFLTV…DKTSALSLSN (175 aa). Residues Ser-676, Thr-677, and Glu-727 each contribute to the L-glutamate site. A disulfide bond links Cys-740 and Cys-795. A helical membrane pass occupies residues 814 to 834; sequence VAGVFYILVGGLGLAMLVALI. Residues 835 to 902 are Cytoplasmic-facing; sequence EFCYKSRAEA…GLAVIASDLP (68 aa). Cys-837 carries S-palmitoyl cysteine lipidation. Ser-862 bears the Phosphoserine mark.

This sequence belongs to the glutamate-gated ion channel (TC 1.A.10.1) family. GRIA4 subfamily. In terms of assembly, homotetramer or heterotetramer of pore-forming glutamate receptor subunits. Tetramers may be formed by the dimerization of dimers. Interacts with EPB41L1 via its C-terminus. Isoform 3 interacts with PICK1. Found in a complex with GRIA1, GRIA2, GRIA3, CNIH2, CNIH3, CACNG2, CACNG3, CACNG4, CACNG5, CACNG7 and CACNG8. Interacts with CACNG5 and PRKCG. Found in a complex with GRIA1, GRIA2, GRIA3, DLG4, CACNG8 and CNIH2. In terms of processing, palmitoylated. Depalmitoylated upon L-glutamate stimulation. ZDHHC3/GODZ specifically palmitoylates Cys-611, which leads to Golgi retention and decreased cell surface expression. In contrast, Cys-837 palmitoylation does not affect cell surface expression but regulates stimulation-dependent endocytosis. Post-translationally, phosphorylated at Ser-862 by PRKCG; phosphorylation increases plasma membrane-associated GRI4 expression.

Its subcellular location is the cell membrane. The protein resides in the postsynaptic cell membrane. It localises to the cell projection. The protein localises to the dendrite. The catalysed reaction is Ca(2+)(in) = Ca(2+)(out). It carries out the reaction Na(+)(in) = Na(+)(out). It catalyses the reaction Mg(2+)(in) = Mg(2+)(out). Ionotropic glutamate receptor that functions as a ligand-gated cation channel, gated by L-glutamate and glutamatergic agonists such as alpha-amino-3-hydroxy-5-methyl-4-isoxazolepropionic acid (AMPA), quisqualic acid, and kainic acid. L-glutamate acts as an excitatory neurotransmitter at many synapses in the central nervous system and plays an important role in fast excitatory synaptic transmission. Binding of the excitatory neurotransmitter L-glutamate induces a conformation change, leading to the opening of the cation channel, and thereby converts the chemical signal to an electrical impulse upon entry of monovalent and divalent cations such as sodium and calcium. The receptor then desensitizes rapidly and enters a transient inactive state, characterized by the presence of bound agonist. In the presence of CACNG8, shows resensitization which is characterized by a delayed accumulation of current flux upon continued application of L-glutamate. In Mus musculus (Mouse), this protein is Glutamate receptor 4.